A 356-amino-acid polypeptide reads, in one-letter code: Fe(3+) ions import ATP-binding protein FbpC 2 (356 aa).

The 235-residue stretch at 12 to 246 folds into the ABC transporter domain; sequence LTVKNLNKFF…PNHLETAKFM (235 aa). ATP is bound at residue 44 to 51; the sequence is GSSGCGKT.

This sequence belongs to the ABC transporter superfamily. Fe(3+) ion importer (TC 3.A.1.10) family. In terms of assembly, the complex is composed of two ATP-binding proteins (FbpC), two transmembrane proteins (FbpB) and a solute-binding protein (FbpA).

Its subcellular location is the cell inner membrane. The catalysed reaction is Fe(3+)(out) + ATP + H2O = Fe(3+)(in) + ADP + phosphate + H(+). Part of the ABC transporter complex FbpABC involved in Fe(3+) ions import. Responsible for energy coupling to the transport system. This chain is Fe(3+) ions import ATP-binding protein FbpC 2, found in Haemophilus influenzae (strain ATCC 51907 / DSM 11121 / KW20 / Rd).